The sequence spans 111 residues: Cytochrome c3, 26 kDa (111 aa).

Heme c is bound by residues histidine 30, histidine 33, cysteine 38, cysteine 41, histidine 42, histidine 43, cysteine 54, cysteine 59, histidine 60, histidine 77, cysteine 86, cysteine 89, histidine 90, cysteine 105, cysteine 108, and histidine 109.

As to quaternary structure, homodimer. Heme c is required as a cofactor.

It localises to the periplasm. Its function is as follows. Participates in sulfate respiration coupled with phosphorylation by transferring electrons from the enzyme dehydrogenase to ferredoxin. This chain is Cytochrome c3, 26 kDa, found in Desulfomicrobium norvegicum (strain DSM 1741 / NCIMB 8310) (Desulfovibrio baculatus (strain Norway 4)).